The chain runs to 418 residues: ATP-dependent RNA helicase RhlB (418 aa).

The Q motif motif lies at Thr-9–Ala-37. Positions Leu-40–Ile-219 constitute a Helicase ATP-binding domain. An ATP-binding site is contributed by Ala-53–Thr-60. The DEAD box motif lies at Asp-165–Asp-168. The Helicase C-terminal domain occupies Lys-243–Leu-390.

This sequence belongs to the DEAD box helicase family. RhlB subfamily. Component of the RNA degradosome, which is a multiprotein complex involved in RNA processing and mRNA degradation.

The protein resides in the cytoplasm. The enzyme catalyses ATP + H2O = ADP + phosphate + H(+). DEAD-box RNA helicase involved in RNA degradation. Has RNA-dependent ATPase activity and unwinds double-stranded RNA. In Psychromonas ingrahamii (strain DSM 17664 / CCUG 51855 / 37), this protein is ATP-dependent RNA helicase RhlB.